The chain runs to 791 residues: Protein CLASP-2 (791 aa).

3 stretches are compositionally biased toward low complexity: residues 259 to 271 (ASDAASSSTSVNS), 323 to 334 (RTPNTRPMTTRT), and 372 to 381 (SQPGSRNGSP). Disordered regions lie at residues 259-283 (ASDAASSSTSVNSERGSAPFRSKLS), 315-391 (TRMT…TGTL), and 422-454 (AMNTAKESLGQPSRTEDDEFLLPKRKPKTPQKS). A compositionally biased stretch (polar residues) spans 422–434 (AMNTAKESLGQPS).

It belongs to the CLASP family. Interacts with hcp-1 and hcp-2.

Its subcellular location is the cytoplasm. It localises to the cytoskeleton. It is found in the microtubule organizing center. The protein localises to the centrosome. The protein resides in the chromosome. Its subcellular location is the centromere. It localises to the kinetochore. It is found in the spindle. Probable microtubule plus-end tracking protein that promotes the stabilization of dynamic microtubules. Required for the formation of mitotic and meiotic spindles. Specifically promotes the polymerization of kinetochore-bound microtubules. Also required for cytoplasmic streaming. The polypeptide is Protein CLASP-2 (cls-2) (Caenorhabditis briggsae).